The sequence spans 439 residues: Serine/threonine-protein kinase 2 (439 aa).

One can recognise a Protein kinase domain in the interval N87–N439. Residues I93–V101 and K117 contribute to the ATP site. D307 functions as the Proton acceptor in the catalytic mechanism.

Belongs to the protein kinase superfamily. Ser/Thr protein kinase family. In terms of processing, phosphorylated in vivo. Autophosphorylated in vitro.

The protein localises to the host endoplasmic reticulum. The protein resides in the host endoplasmic reticulum-Golgi intermediate compartment. The catalysed reaction is L-seryl-[protein] + ATP = O-phospho-L-seryl-[protein] + ADP + H(+). The enzyme catalyses L-threonyl-[protein] + ATP = O-phospho-L-threonyl-[protein] + ADP + H(+). In terms of biological role, essential serine-protein kinase involved in the early stage of virion morphogenesis. The chain is Serine/threonine-protein kinase 2 (OPG054) from Monkeypox virus.